The sequence spans 1484 residues: Cystic fibrosis transmembrane conductance regulator (1484 aa).

At 1 to 77 (MQRSPLERAN…KLINALRRCF (77 aa)) the chain is on the cytoplasmic side. Residues 78–98 (FWRFMFYGLLLYLGEVTKAVQ) traverse the membrane as a helical segment. The region spanning 81–365 (FMFYGLLLYL…WAVQMWYDSI (285 aa)) is the ABC transmembrane type-1 1 domain. Over 99–122 (PLLLGRIIASYDPDNAHERSIAYY) the chain is Extracellular. A helical transmembrane segment spans residues 123–146 (LGIGLCLLFIVRTLLLHPAVFGLH). Topologically, residues 147–195 (HIGMQMRIALFSLIYKKTLKLSSRVLDKISTGQLVSLLSNNLNKFDEGL) are cytoplasmic. Residues 196 to 216 (ALAHFVWIAPLQVMLLMGLLW) traverse the membrane as a helical segment. At 217 to 222 (DLLQAS) the chain is on the extracellular side. Residues 223-243 (AFCGLAVLVVLVLFQAWLGHR) traverse the membrane as a helical segment. Topologically, residues 244 to 298 (MMKYRDRRAGKINERLVITAEIIENIQSVKAYCWEEAMENMIESLRETELKLTRK) are cytoplasmic. A helical transmembrane segment spans residues 299-319 (AAYMRYFNSSAFFFSGFFVVF). The Extracellular portion of the chain corresponds to 320-339 (LSVLPSMLTKGIVLRKIFTT). Residues 340 to 358 (ISFCIVLRMAVTRQFPWAV) traverse the membrane as a helical segment. The Cytoplasmic segment spans residues 359–859 (QMWYDSIGAI…YLRYMTIHKK (501 aa)). ATP is bound by residues Trp-401, Ser-434, 458 to 465 (GSTGAGKT), and Gln-493. The ABC transporter 1 domain maps to 423–646 (SDDKNLIFSN…RPDFSSKLMG (224 aa)). A lipid anchor (S-palmitoyl cysteine) is attached at Cys-524. Ser-549 and Ser-660 each carry phosphoserine. A disordered R region region spans residues 654–832 (SAERRNSILT…EEINEEDLKE (179 aa)). Ser-670 is subject to Phosphoserine; by PKA. Ser-686 bears the Phosphoserine mark. Lys-688 is covalently cross-linked (Glycyl lysine isopeptide (Lys-Gly) (interchain with G-Cter in ubiquitin)). Phosphoserine occurs at positions 700, 712, 737, 768, 791, 796, and 814. A helical transmembrane segment spans residues 860 to 880 (LIFVLMMCLVIFLIEVAASLV). Positions 860–1159 (LIFVLMMCLV…AVNASIDVDS (300 aa)) constitute an ABC transmembrane type-1 2 domain. Residues 881 to 922 (GLCLFKDGASRMNSTSNLNHTSTLDWFAVIVTNTSTYYMFYI) are Extracellular-facing. N-linked (GlcNAc...) asparagine glycans are attached at residues Asn-893, Asn-899, and Asn-913. The discontinuously helical transmembrane segment at 923–943 (YVGVADTLLALGFLRGLPLVH) threads the bilayer. The Cytoplasmic segment spans residues 944–994 (SLISVSKILHQKMLHSVLQAPMSTFNTLKTGSILNRFSKDMAILDDLLPLT). A helical transmembrane segment spans residues 995–1015 (IFDFIQLLLIVIGAVTVVSAL). At 1016–1017 (QP) the chain is on the extracellular side. The helical transmembrane segment at 1018 to 1038 (YIFLASVPVVIAFVLLRAYFL) threads the bilayer. At 1039-1099 (RTSQQLKQLE…TANWFLYLST (61 aa)) the chain is on the cytoplasmic side. Residues 1100–1120 (LRWFQMRIEMVFVIFFILVTF) form a helical membrane-spanning segment. Over 1121 to 1134 (ISILTTGDGEGKVG) the chain is Extracellular. The helical transmembrane segment at 1135–1155 (IVLTLAMNIMGTLQWAVNASI) threads the bilayer. Over 1156–1484 (DVDSLMRSVS…TEEEVQDTRL (329 aa)) the chain is Cytoplasmic. The ABC transporter 2 domain occupies 1212–1445 (MTVQDLTAKY…KSVFKQAISH (234 aa)). ATP is bound by residues Tyr-1221 and 1246-1253 (GRTGSGKS). The segment at 1388–1484 (KTLKQAFTNC…TEEEVQDTRL (97 aa)) is interaction with GORASP2. Residue Cys-1397 is the site of S-palmitoyl cysteine attachment. A phosphoserine mark is found at Ser-1446 and Ser-1460. Residues 1463 to 1484 (LSRPKITALQEETEEEVQDTRL) are disordered. Residues 1473–1484 (EETEEEVQDTRL) show a composition bias toward acidic residues. A PDZ-binding motif is present at residues 1482–1484 (TRL).

This sequence belongs to the ABC transporter superfamily. ABCC family. CFTR transporter (TC 3.A.1.202) subfamily. Monomer; does not require oligomerization for channel activity. May form oligomers in the membrane. Interacts with SLC26A3, SLC26A6 and NHERF1. Interacts with SHANK2. Interacts with MYO6. Interacts (via C-terminus) with GOPC (via PDZ domain); this promotes CFTR internalization and thereby decreases channel activity. Interacts with SLC4A7 through NHERF1. Found in a complex with MYO5B and RAB11A. Interacts with ANO1. Interacts with SLC26A8. Interacts with AHCYL1; the interaction increases CFTR activity. Interacts with CSE1L. The core-glycosylated form interacts with GORASP2 (via PDZ GRASP-type 1 domain) in respone to ER stress. Interacts with MARCHF2; the interaction leads to CFTR ubiqtuitination and degradation. Interacts with ADGRG2. Post-translationally, N-glycosylated. In terms of processing, phosphorylated; cAMP treatment promotes phosphorylation and activates the channel. Dephosphorylation decreases the ATPase activity (in vitro). Phosphorylation at PKA sites activates the channel. Phosphorylation at PKC sites enhances the response to phosphorylation by PKA. Phosphorylated by AMPK; this inhibits channel activity. Ubiquitinated, leading to its degradation in the lysosome. Deubiquitination by USP10 in early endosomes enhances its endocytic recycling to the cell membrane. Ubiquitinated by RNF185 during ER stress. Ubiquitinated by MARCHF2.

The protein localises to the apical cell membrane. It is found in the early endosome membrane. The protein resides in the cell membrane. Its subcellular location is the recycling endosome membrane. It localises to the endoplasmic reticulum membrane. The protein localises to the nucleus. It catalyses the reaction ATP + H2O + closed Cl(-) channel = ADP + phosphate + open Cl(-) channel.. The catalysed reaction is chloride(in) = chloride(out). It carries out the reaction hydrogencarbonate(in) = hydrogencarbonate(out). The enzyme catalyses ATP + H2O = ADP + phosphate + H(+). Its function is as follows. Epithelial ion channel that plays an important role in the regulation of epithelial ion and water transport and fluid homeostasis. Mediates the transport of chloride ions across the cell membrane. Possesses an intrinsic ATPase activity and utilizes ATP to gate its channel; the passive flow of anions through the channel is gated by cycles of ATP binding and hydrolysis by the ATP-binding domains. The ion channel is also permeable to HCO(3)(-); selectivity depends on the extracellular chloride concentration. Exerts its function also by modulating the activity of other ion channels and transporters. Contributes to the regulation of the pH and the ion content of the epithelial fluid layer. Modulates the activity of the epithelial sodium channel (ENaC) complex, in part by regulating the cell surface expression of the ENaC complex. May regulate bicarbonate secretion and salvage in epithelial cells by regulating the transporter SLC4A7. Can inhibit the chloride channel activity of ANO1. Plays a role in the chloride and bicarbonate homeostasis during sperm epididymal maturation and capacitation. This Ornithorhynchus anatinus (Duckbill platypus) protein is Cystic fibrosis transmembrane conductance regulator.